Reading from the N-terminus, the 91-residue chain is ATP synthase subunit c (91 aa).

A run of 2 helical transmembrane segments spans residues 4–24 (FTMC…GTGI) and 53–73 (IGLA…LIIL).

It belongs to the ATPase C chain family. F-type ATPases have 2 components, F(1) - the catalytic core - and F(0) - the membrane proton channel. F(1) has five subunits: alpha(3), beta(3), gamma(1), delta(1), epsilon(1). F(0) has three main subunits: a(1), b(2) and c(10-14). The alpha and beta chains form an alternating ring which encloses part of the gamma chain. F(1) is attached to F(0) by a central stalk formed by the gamma and epsilon chains, while a peripheral stalk is formed by the delta and b chains.

The protein resides in the cell inner membrane. Functionally, f(1)F(0) ATP synthase produces ATP from ADP in the presence of a proton or sodium gradient. F-type ATPases consist of two structural domains, F(1) containing the extramembraneous catalytic core and F(0) containing the membrane proton channel, linked together by a central stalk and a peripheral stalk. During catalysis, ATP synthesis in the catalytic domain of F(1) is coupled via a rotary mechanism of the central stalk subunits to proton translocation. Key component of the F(0) channel; it plays a direct role in translocation across the membrane. A homomeric c-ring of between 10-14 subunits forms the central stalk rotor element with the F(1) delta and epsilon subunits. This Geobacter sulfurreducens (strain ATCC 51573 / DSM 12127 / PCA) protein is ATP synthase subunit c.